A 253-amino-acid chain; its full sequence is Endonuclease NucS (253 aa).

It belongs to the NucS endonuclease family.

It localises to the cytoplasm. In terms of biological role, cleaves both 3' and 5' ssDNA extremities of branched DNA structures. This is Endonuclease NucS from Pyrococcus horikoshii (strain ATCC 700860 / DSM 12428 / JCM 9974 / NBRC 100139 / OT-3).